The following is a 544-amino-acid chain: (E,E)-germacrene B synthase (544 aa).

Mg(2+) is bound by residues aspartate 296, aspartate 300, and glutamate 449. A DDXXD motif motif is present at residues 296–300; it reads DDTFD.

It belongs to the terpene synthase family. It depends on Mg(2+) as a cofactor. Requires Mn(2+) as cofactor.

It localises to the cytoplasm. It carries out the reaction (2E,6E)-farnesyl diphosphate = (1E,4E)-germacrene B + diphosphate. It participates in secondary metabolite biosynthesis; terpenoid biosynthesis. Its function is as follows. Involved in the biosynthesis of germacrene B. In Solanum habrochaites (Wild tomato), this protein is (E,E)-germacrene B synthase (SSTLH1).